Reading from the N-terminus, the 290-residue chain is tRNA-cytidine(32) 2-sulfurtransferase (290 aa).

A PP-loop motif motif is present at residues 36-41 (SGGKDS). The [4Fe-4S] cluster site is built by C111, C114, and C202. The disordered stretch occupies residues 259–290 (DPWLDAEDEEAEDCGEPAGDGVVSLGGARGGR). The span at 262 to 273 (LDAEDEEAEDCG) shows a compositional bias: acidic residues.

It belongs to the TtcA family. As to quaternary structure, homodimer. Requires Mg(2+) as cofactor. It depends on [4Fe-4S] cluster as a cofactor.

It localises to the cytoplasm. It carries out the reaction cytidine(32) in tRNA + S-sulfanyl-L-cysteinyl-[cysteine desulfurase] + AH2 + ATP = 2-thiocytidine(32) in tRNA + L-cysteinyl-[cysteine desulfurase] + A + AMP + diphosphate + H(+). It participates in tRNA modification. Catalyzes the ATP-dependent 2-thiolation of cytidine in position 32 of tRNA, to form 2-thiocytidine (s(2)C32). The sulfur atoms are provided by the cysteine/cysteine desulfurase (IscS) system. The chain is tRNA-cytidine(32) 2-sulfurtransferase from Anaeromyxobacter dehalogenans (strain 2CP-C).